The chain runs to 160 residues: Major strawberry allergen Fra a 1.07 (160 aa).

Belongs to the BetVI family. Phosphorylated in vivo. Phosphorylation prevents its activity as ribonuclease. In terms of tissue distribution, highly expressed in roots. Expressed a low levels in ripe red fruits.

In terms of biological role, possesses ribonuclease activity in vitro. The sequence is that of Major strawberry allergen Fra a 1.07 from Fragaria ananassa (Strawberry).